Reading from the N-terminus, the 548-residue chain is Acetylcholine receptor subunit alpha-type des-2 (548 aa).

An N-terminal signal peptide occupies residues 1 to 19 (MLIIIQSLLLATTASLCIA). The Extracellular segment spans residues 21–239 (TPVPTQIRLV…LTLYLRRKPL (219 aa)). 3 N-linked (GlcNAc...) asparagine glycosylation sites follow: N52, N96, and N224. 3 helical membrane passes run 240 to 260 (FYLV…IVGF), 274 to 294 (VSLG…VSDQ), and 301 to 321 (FIPL…LGTV). Residues 422 to 460 (LIHLSPTAHQPDESISPSAPPVPSSSPLPPPLTPGPADD) form a disordered region. The span at 439–455 (SAPPVPSSSPLPPPLTP) shows a compositional bias: pro residues. The chain crosses the membrane as a helical span at residues 517–537 (FVIFVVAFLIITFGINFIGFI). At 538–548 (HWHQAGVEYGG) the chain is on the cytoplasmic side.

The protein belongs to the ligand-gated ion channel (TC 1.A.9) family. Acetylcholine receptor (TC 1.A.9.1) subfamily. The functional receptor is a heteromer of deg-3 and des-2. Interacts with ric-3; which is required for proper receptor folding.

The protein localises to the cell membrane. Its function is as follows. Subunit of the non-synaptic neuronal acetylcholine receptor (AChR), which may play a role in chemotaxis towards choline. After binding choline or acetylcholine, the AChR responds by an extensive change in conformation that affects all subunits and leads to opening of an ion-conducting channel across the plasma membrane. The polypeptide is Acetylcholine receptor subunit alpha-type des-2 (des-2) (Caenorhabditis elegans).